The primary structure comprises 354 residues: N-acetyl-gamma-glutamyl-phosphate reductase (354 aa).

The active site involves Cys-156.

It belongs to the NAGSA dehydrogenase family. Type 1 subfamily.

The protein localises to the cytoplasm. The enzyme catalyses N-acetyl-L-glutamate 5-semialdehyde + phosphate + NADP(+) = N-acetyl-L-glutamyl 5-phosphate + NADPH + H(+). It participates in amino-acid biosynthesis; L-arginine biosynthesis; N(2)-acetyl-L-ornithine from L-glutamate: step 3/4. Its function is as follows. Catalyzes the NADPH-dependent reduction of N-acetyl-5-glutamyl phosphate to yield N-acetyl-L-glutamate 5-semialdehyde. In Bordetella pertussis (strain Tohama I / ATCC BAA-589 / NCTC 13251), this protein is N-acetyl-gamma-glutamyl-phosphate reductase.